We begin with the raw amino-acid sequence, 453 residues long: Septin-10 (453 aa).

A disordered region spans residues K18–S43. The segment covering S27–P37 has biased composition (basic and acidic residues). One can recognise a Septin-type G domain in the interval Q62–E328. The segment at G72 to S79 is G1 motif. GTP-binding positions include G72–S79, G127, K208–E216, G262, and R277. The tract at residues N124–G127 is G3 motif. The G4 motif stretch occupies residues A207–D210. Residues T433 to M453 are disordered. Over residues L441–M453 the composition is skewed to basic and acidic residues.

It belongs to the TRAFAC class TrmE-Era-EngA-EngB-Septin-like GTPase superfamily. Septin GTPase family. In terms of assembly, septins polymerize into heterooligomeric protein complexes that form filaments, and can associate with cellular membranes, actin filaments and microtubules. GTPase activity is required for filament formation. Interacts with ADGB. Post-translationally, proteolytically cleaved in vitro in a calmodulin-dependent manner.

It is found in the cytoplasm. The protein resides in the cytoskeleton. It localises to the cell projection. The protein localises to the cilium. Its subcellular location is the flagellum. In terms of biological role, filament-forming cytoskeletal GTPase. May play a role in cytokinesis (Potential). The polypeptide is Septin-10 (Bos taurus (Bovine)).